The primary structure comprises 81 residues: Putative membrane protein insertion efficiency factor (81 aa).

It belongs to the UPF0161 family.

The protein resides in the cell inner membrane. Functionally, could be involved in insertion of integral membrane proteins into the membrane. The polypeptide is Putative membrane protein insertion efficiency factor (Pseudomonas syringae pv. tomato (strain ATCC BAA-871 / DC3000)).